We begin with the raw amino-acid sequence, 888 residues long: Interference hedgehog (888 aa).

Positions 1–24 (MSLTRFSLCLLLTLLLAAIPVYLA) are cleaved as a signal peptide. The Extracellular portion of the chain corresponds to 25–688 (SPDPGVRILR…SHNETFNLNP (664 aa)). Ig-like C2-type domains lie at 28-123 (PGVR…ARLE), 134-215 (EGFK…VRLA), 234-321 (PHLL…SIQL), and 327-414 (PRIV…LQVN). Disulfide bonds link C51-C106, C155-C203, and C257-C305. Residues N80, N185, N192, N281, N336, N365, N369, and N455 are each glycosylated (N-linked (GlcNAc...) asparagine). Residues C348 and C396 are joined by a disulfide bond. Fibronectin type-III domains are found at residues 450–557 (PPSA…LQRG) and 565–660 (VPSL…TQRP). Heparin-binding residues include R486 and K493. A glycan (N-linked (GlcNAc...) asparagine) is linked at N516. R531 contributes to the heparin binding site. N547 carries N-linked (GlcNAc...) asparagine glycosylation. The segment covering 655 to 667 (GRTQRPRVSTTTE) has biased composition (polar residues). The tract at residues 655-679 (GRTQRPRVSTTTEPAVHAMDTTTPS) is disordered. A glycan (N-linked (GlcNAc...) asparagine) is linked at N681. A helical membrane pass occupies residues 689–709 (LLTGTIGGGALLVLLVVSACL). Topologically, residues 710–888 (CLCRRRSSRG…SSGSLNSVGV (179 aa)) are cytoplasmic. Disordered stretches follow at residues 759-789 (AQQQ…DMSY), 812-864 (SSSL…PGRV), and 869-888 (ARLS…SVGV). Low complexity predominate over residues 760–775 (QQQQQQQQQQQQQQQQ). The span at 843–859 (QPTDGSTADSPRLQASN) shows a compositional bias: polar residues. A compositionally biased stretch (low complexity) spans 872–888 (SSRSENLSSGSLNSVGV).

The protein belongs to the immunoglobulin superfamily. IHOG family. As to quaternary structure, homodimer. Heterotetramer; 2 iHog chains bind 2 hh chains when facilitated by heparin, heparin is required to promote high-affinity interactions between hh and iHog.

The protein localises to the membrane. Functionally, mediates response to the active Hedgehog (Hh) protein signal in embryos, functioning upstream or at the level of patched (ptc). This Drosophila grimshawi (Hawaiian fruit fly) protein is Interference hedgehog.